The sequence spans 495 residues: Bifunctional protein GlmU (495 aa).

The segment at Met-1 to Arg-241 is pyrophosphorylase. Residues Leu-12 to Gly-15, Lys-26, Gln-83, Gly-88 to Thr-89, Ser-112 to Asp-114, Gly-151, Glu-166, Asn-181, and Asn-239 each bind UDP-N-acetyl-alpha-D-glucosamine. Position 114 (Asp-114) interacts with Mg(2+). Mg(2+) is bound at residue Asn-239. The interval Val-242–Ala-262 is linker. Residues Gly-263–Pro-495 form an N-acetyltransferase region. Positions 344 and 362 each coordinate UDP-N-acetyl-alpha-D-glucosamine. The active-site Proton acceptor is His-374. The UDP-N-acetyl-alpha-D-glucosamine site is built by Tyr-377 and Asn-388. Acetyl-CoA-binding positions include Ala-391, Asn-397–Tyr-398, Ser-416, and Ala-434. The disordered stretch occupies residues Ile-457–Pro-495. Low complexity predominate over residues Gln-483–Pro-495.

It in the N-terminal section; belongs to the N-acetylglucosamine-1-phosphate uridyltransferase family. The protein in the C-terminal section; belongs to the transferase hexapeptide repeat family. Homotrimer. Mg(2+) serves as cofactor.

The protein resides in the cytoplasm. It carries out the reaction alpha-D-glucosamine 1-phosphate + acetyl-CoA = N-acetyl-alpha-D-glucosamine 1-phosphate + CoA + H(+). The catalysed reaction is N-acetyl-alpha-D-glucosamine 1-phosphate + UTP + H(+) = UDP-N-acetyl-alpha-D-glucosamine + diphosphate. It participates in nucleotide-sugar biosynthesis; UDP-N-acetyl-alpha-D-glucosamine biosynthesis; N-acetyl-alpha-D-glucosamine 1-phosphate from alpha-D-glucosamine 6-phosphate (route II): step 2/2. Its pathway is nucleotide-sugar biosynthesis; UDP-N-acetyl-alpha-D-glucosamine biosynthesis; UDP-N-acetyl-alpha-D-glucosamine from N-acetyl-alpha-D-glucosamine 1-phosphate: step 1/1. The protein operates within bacterial outer membrane biogenesis; LPS lipid A biosynthesis. In terms of biological role, catalyzes the last two sequential reactions in the de novo biosynthetic pathway for UDP-N-acetylglucosamine (UDP-GlcNAc). The C-terminal domain catalyzes the transfer of acetyl group from acetyl coenzyme A to glucosamine-1-phosphate (GlcN-1-P) to produce N-acetylglucosamine-1-phosphate (GlcNAc-1-P), which is converted into UDP-GlcNAc by the transfer of uridine 5-monophosphate (from uridine 5-triphosphate), a reaction catalyzed by the N-terminal domain. The polypeptide is Bifunctional protein GlmU (Mycobacterium bovis (strain ATCC BAA-935 / AF2122/97)).